A 152-amino-acid polypeptide reads, in one-letter code: Large ribosomal subunit protein bL9 (152 aa).

The protein belongs to the bacterial ribosomal protein bL9 family.

Functionally, binds to the 23S rRNA. In Synechococcus sp. (strain CC9902), this protein is Large ribosomal subunit protein bL9.